Consider the following 381-residue polypeptide: Dual-specificity RNA methyltransferase RlmN (381 aa).

Residue Glu-86 is the Proton acceptor of the active site. The region spanning 105–338 is the Radical SAM core domain; it reads RHARYTICVS…CTIRQSKGLD (234 aa). Cys-112 and Cys-343 are oxidised to a cystine. Residues Cys-119, Cys-123, and Cys-126 each contribute to the [4Fe-4S] cluster site. Residues 169 to 170, Ser-201, 224 to 226, and Asn-300 each bind S-adenosyl-L-methionine; these read GE and SLH. Cys-343 serves as the catalytic S-methylcysteine intermediate. Residues 351–381 are disordered; the sequence is ENPKFRANVSGNSAAKTEEKPTNDKTNVSKK.

It belongs to the radical SAM superfamily. RlmN family. [4Fe-4S] cluster is required as a cofactor.

It is found in the cytoplasm. The enzyme catalyses adenosine(2503) in 23S rRNA + 2 reduced [2Fe-2S]-[ferredoxin] + 2 S-adenosyl-L-methionine = 2-methyladenosine(2503) in 23S rRNA + 5'-deoxyadenosine + L-methionine + 2 oxidized [2Fe-2S]-[ferredoxin] + S-adenosyl-L-homocysteine. It carries out the reaction adenosine(37) in tRNA + 2 reduced [2Fe-2S]-[ferredoxin] + 2 S-adenosyl-L-methionine = 2-methyladenosine(37) in tRNA + 5'-deoxyadenosine + L-methionine + 2 oxidized [2Fe-2S]-[ferredoxin] + S-adenosyl-L-homocysteine. Functionally, specifically methylates position 2 of adenine 2503 in 23S rRNA and position 2 of adenine 37 in tRNAs. m2A2503 modification seems to play a crucial role in the proofreading step occurring at the peptidyl transferase center and thus would serve to optimize ribosomal fidelity. The protein is Dual-specificity RNA methyltransferase RlmN of Campylobacter concisus (strain 13826).